We begin with the raw amino-acid sequence, 315 residues long: 3-oxoacyl-[acyl-carrier-protein] reductase 3, chloroplastic (315 aa).

Residues 1 to 55 constitute a chloroplast transit peptide; it reads MATTVAATKLTSLKAVKKLGFREIRQVRQWTPLQSSMPHFGSRQSFATSTVVKAQ. Position 77-101 (77-101) interacts with NADP(+); the sequence is VTGASRGIGKAIALSLGKAGCKVLV. Ser209 serves as a coordination point for substrate. The active-site Proton acceptor is the Tyr222.

This sequence belongs to the short-chain dehydrogenases/reductases (SDR) family. Homotetramer.

It is found in the plastid. The protein resides in the chloroplast. It catalyses the reaction a (3R)-hydroxyacyl-[ACP] + NADP(+) = a 3-oxoacyl-[ACP] + NADPH + H(+). Its pathway is lipid metabolism; fatty acid biosynthesis. The polypeptide is 3-oxoacyl-[acyl-carrier-protein] reductase 3, chloroplastic (bkr3) (Brassica napus (Rape)).